Consider the following 85-residue polypeptide: Large ribosomal subunit protein bL27 (85 aa).

The disordered stretch occupies residues 1 to 21; the sequence is MAHKKAGGSSRNGRDSEGRRL.

Belongs to the bacterial ribosomal protein bL27 family.

In Rhodospirillum rubrum (strain ATCC 11170 / ATH 1.1.1 / DSM 467 / LMG 4362 / NCIMB 8255 / S1), this protein is Large ribosomal subunit protein bL27.